We begin with the raw amino-acid sequence, 208 residues long: Small ribosomal subunit protein uS4 (208 aa).

An S4 RNA-binding domain is found at 98–161 (RRLDNVIYRL…RKMPVIAEAQ (64 aa)).

The protein belongs to the universal ribosomal protein uS4 family. Part of the 30S ribosomal subunit. Contacts protein S5. The interaction surface between S4 and S5 is involved in control of translational fidelity.

Its function is as follows. One of the primary rRNA binding proteins, it binds directly to 16S rRNA where it nucleates assembly of the body of the 30S subunit. Functionally, with S5 and S12 plays an important role in translational accuracy. The protein is Small ribosomal subunit protein uS4 of Oleidesulfovibrio alaskensis (strain ATCC BAA-1058 / DSM 17464 / G20) (Desulfovibrio alaskensis).